The sequence spans 356 residues: Alpha-N-acetylneuraminide alpha-2,8-sialyltransferase (356 aa).

The Cytoplasmic segment spans residues 1 to 29 (MSPCGRARRQTSRGAMAVLAWKFPRTRLP). The chain crosses the membrane as a helical; Signal-anchor for type II membrane protein span at residues 30 to 48 (MGASALCVVVLCWLYIFPV). At 49 to 356 (YRLPNEKEIV…CEDTSLQPTS (308 aa)) the chain is on the lumenal side. N71 and N119 each carry an N-linked (GlcNAc...) asparagine glycan. Cystine bridges form between C138/C287 and C152/C347. Residues N143 and N166 each contribute to the CMP-N-acetyl-beta-neuraminate site. N214 and N245 each carry an N-linked (GlcNAc...) asparagine glycan. The CMP-N-acetyl-beta-neuraminate site is built by S274, T275, G276, W296, and H310. The Proton donor/acceptor role is filled by H322.

Belongs to the glycosyltransferase 29 family. In terms of tissue distribution, strongly expressed in melanoma cell lines, adult and fetal brain and to a lesser extent in adult and fetal lung.

The protein resides in the golgi apparatus membrane. It carries out the reaction an N-acetyl-alpha-neuraminyl-(2-&gt;3)-beta-D-galactosyl derivative + CMP-N-acetyl-beta-neuraminate = an N-acetyl-alpha-neuraminyl-(2-&gt;8)-N-acetyl-alpha-neuraminyl-(2-&gt;3)-beta-D-galactosyl derivative + CMP + H(+). It catalyses the reaction a ganglioside GM3 (d18:1(4E)) + CMP-N-acetyl-beta-neuraminate = a ganglioside GD3 (d18:1(4E)) + CMP + H(+). The catalysed reaction is a ganglioside GD3 (d18:1(4E)) + CMP-N-acetyl-beta-neuraminate = a ganglioside GT3 (d18:1(4E)) + CMP + H(+). The enzyme catalyses a ganglioside GD1a (d18:1(4E)) + CMP-N-acetyl-beta-neuraminate = a ganglioside GT1a (d18:1(4E)) + CMP + H(+). It carries out the reaction a ganglioside GT1b (d18:1(4E)) + CMP-N-acetyl-beta-neuraminate = a ganglioside GQ1b (d18:1(4E)) + CMP + H(+). It catalyses the reaction a ganglioside GM1b (d18:1(4E)) + CMP-N-acetyl-beta-neuraminate = a ganglioside GD1c (d18:1(4E)) + CMP + H(+). The catalysed reaction is a ganglioside GD3 + CMP-N-acetyl-beta-neuraminate = a ganglioside GT3 + CMP + H(+). The enzyme catalyses [alpha-N-acetylneuraminyl-(2-&gt;8)](n)-alpha-N-acetylneuraminyl-(2-&gt;8)-alpha-N-acetylneuraminyl-(2-&gt;3)-beta-D-galactosyl-(1-&gt;4)-beta-D-glucosyl-(1&lt;-&gt;1)-ceramide + CMP-N-acetyl-beta-neuraminate = [alpha-N-acetylneuraminyl-(2-&gt;8)](n+1)-alpha-N-acetylneuraminyl-(2-&gt;8)-alpha-N-acetylneuraminyl-(2-&gt;3)-beta-D-galactosyl-(1-&gt;4)-beta-D-glucosyl-(1&lt;-&gt;1)-ceramide + CMP + H(+). It functions in the pathway protein modification; protein glycosylation. It participates in lipid metabolism; sphingolipid metabolism. Catalyzes the addition of sialic acid in alpha 2,8-linkage to the sialic acid moiety of the ganglioside GM3 to form ganglioside GD3; gangliosides are a subfamily of complex glycosphingolipds that contain one or more residues of sialic acid. Can catalyze the addition of a second alpha-2,8-sialic acid to GD3 to form GT3. Can use GM1b, GD1a and GT1b as acceptor substrates to synthesize GD1c, GT1a and GQ1b respectively. Can synthesize unusual tetra- and pentasialylated lactosylceramide derivatives identified as GQ3 (II3Neu5Ac4-Gg2Cer) and GP3 (II3Neu5Ac5-Gg2Cer) in breast cancer cells. In Homo sapiens (Human), this protein is Alpha-N-acetylneuraminide alpha-2,8-sialyltransferase.